A 520-amino-acid polypeptide reads, in one-letter code: 4-hydroxyphenylacetate 3-monooxygenase oxygenase component (520 aa).

FAD-binding positions include 155–157 (HAI) and Thr-196.

Belongs to the FADH(2)-utilizing monooxygenase family. Homodimer. HPA 3-hydroxylase consists of a reductase component HpaC and an oxygenase component HpaB. Some form of interactions between the reductase and the oxygenase facilitate the transfer of FADH(-) to the oxygenase in P.aeruginosa, although interactions are not required in other species.

The enzyme catalyses 4-hydroxyphenylacetate + FADH2 + O2 = 3,4-dihydroxyphenylacetate + FAD + H2O + H(+). The protein operates within aromatic compound metabolism; 4-hydroxyphenylacetate degradation; pyruvate and succinate semialdehyde from 4-hydroxyphenylacetate: step 1/7. In terms of biological role, oxygenase component of the 4-hydroxyphenylacetate (HPA) 3-hydroxylase. Catalyzes the hydroxylation of 4-hydroxyphenylacetate to form 3,4-dihydroxyphenylacetate, using FADH(-) provided by the reductase component HpaC to activate oxygen. To a lesser extent, can also use reduced FMN. In vitro, has hydroxylation activity toward tyrosol and various cinnamic acid derivatives, catalyzing the hydroxylation of p-coumaric acid, caffeic acid, ferulic acid, and coniferaldehyde. This Pseudomonas aeruginosa (strain ATCC 15692 / DSM 22644 / CIP 104116 / JCM 14847 / LMG 12228 / 1C / PRS 101 / PAO1) protein is 4-hydroxyphenylacetate 3-monooxygenase oxygenase component.